The chain runs to 77 residues: UPF0349 protein lin2491 (77 aa).

This sequence belongs to the UPF0349 family.

This is UPF0349 protein lin2491 from Listeria innocua serovar 6a (strain ATCC BAA-680 / CLIP 11262).